The following is an 88-amino-acid chain: Cell division topological specificity factor (88 aa).

The protein belongs to the MinE family.

Its function is as follows. Prevents the cell division inhibition by proteins MinC and MinD at internal division sites while permitting inhibition at polar sites. This ensures cell division at the proper site by restricting the formation of a division septum at the midpoint of the long axis of the cell. This Escherichia fergusonii (strain ATCC 35469 / DSM 13698 / CCUG 18766 / IAM 14443 / JCM 21226 / LMG 7866 / NBRC 102419 / NCTC 12128 / CDC 0568-73) protein is Cell division topological specificity factor.